Here is a 158-residue protein sequence, read N- to C-terminus: Transcription elongation factor GreA (158 aa).

A coiled-coil region spans residues 48-75 (NSEYDSAKEDQAFVEGRIAQLEKMIRNA).

Belongs to the GreA/GreB family.

Functionally, necessary for efficient RNA polymerase transcription elongation past template-encoded arresting sites. The arresting sites in DNA have the property of trapping a certain fraction of elongating RNA polymerases that pass through, resulting in locked ternary complexes. Cleavage of the nascent transcript by cleavage factors such as GreA or GreB allows the resumption of elongation from the new 3'terminus. GreA releases sequences of 2 to 3 nucleotides. The sequence is that of Transcription elongation factor GreA from Shouchella clausii (strain KSM-K16) (Alkalihalobacillus clausii).